A 234-amino-acid polypeptide reads, in one-letter code: Small ribosomal subunit protein uS3 (234 aa).

Residues 39–107 (IRKYVKKELY…EIAVNIKEER (69 aa)) form the KH type-2 domain. Residues 213 to 222 (PTEKAEETTS) are compositionally biased toward basic and acidic residues. Positions 213-234 (PTEKAEETTSKPKRRPAKKRGK) are disordered. The segment covering 223–234 (KPKRRPAKKRGK) has biased composition (basic residues).

This sequence belongs to the universal ribosomal protein uS3 family. In terms of assembly, part of the 30S ribosomal subunit. Forms a tight complex with proteins S10 and S14.

Its function is as follows. Binds the lower part of the 30S subunit head. Binds mRNA in the 70S ribosome, positioning it for translation. This is Small ribosomal subunit protein uS3 from Aliarcobacter butzleri (strain RM4018) (Arcobacter butzleri).